The chain runs to 147 residues: 3-dehydroquinate dehydratase (147 aa).

Catalysis depends on tyrosine 23, which acts as the Proton acceptor. Asparagine 74, histidine 80, and aspartate 87 together coordinate substrate. Histidine 100 serves as the catalytic Proton donor. Substrate contacts are provided by residues 101 to 102 (IS) and arginine 111.

Belongs to the type-II 3-dehydroquinase family. In terms of assembly, homododecamer.

It catalyses the reaction 3-dehydroquinate = 3-dehydroshikimate + H2O. The protein operates within metabolic intermediate biosynthesis; chorismate biosynthesis; chorismate from D-erythrose 4-phosphate and phosphoenolpyruvate: step 3/7. Its function is as follows. Catalyzes a trans-dehydration via an enolate intermediate. The polypeptide is 3-dehydroquinate dehydratase (Prochlorococcus marinus (strain MIT 9301)).